A 361-amino-acid chain; its full sequence is 3-dehydroquinate synthase (361 aa).

NAD(+) is bound by residues 73–78, 107–111, 131–132, K144, K153, and 171–174; these read DAEAGK, GAATD, TT, and TLET. Residues E186, H249, and H265 each coordinate Zn(2+).

It belongs to the sugar phosphate cyclases superfamily. Dehydroquinate synthase family. Requires NAD(+) as cofactor. It depends on Co(2+) as a cofactor. Zn(2+) serves as cofactor.

It is found in the cytoplasm. It carries out the reaction 7-phospho-2-dehydro-3-deoxy-D-arabino-heptonate = 3-dehydroquinate + phosphate. It participates in metabolic intermediate biosynthesis; chorismate biosynthesis; chorismate from D-erythrose 4-phosphate and phosphoenolpyruvate: step 2/7. Functionally, catalyzes the conversion of 3-deoxy-D-arabino-heptulosonate 7-phosphate (DAHP) to dehydroquinate (DHQ). The polypeptide is 3-dehydroquinate synthase (Mycobacterium leprae (strain TN)).